The chain runs to 517 residues: GMP synthase [glutamine-hydrolyzing] (517 aa).

One can recognise a Glutamine amidotransferase type-1 domain in the interval 9 to 199 (RILILDFGSQ…VLNVCGCEGL (191 aa)). Cys86 acts as the Nucleophile in catalysis. Residues His173 and Glu175 contribute to the active site. The region spanning 200–392 (WTSASIIEDA…LGLPYNMLYR (193 aa)) is the GMPS ATP-PPase domain. Residue 227 to 233 (SGGVDSS) coordinates ATP.

Homodimer.

It carries out the reaction XMP + L-glutamine + ATP + H2O = GMP + L-glutamate + AMP + diphosphate + 2 H(+). The protein operates within purine metabolism; GMP biosynthesis; GMP from XMP (L-Gln route): step 1/1. In terms of biological role, catalyzes the synthesis of GMP from XMP. The chain is GMP synthase [glutamine-hydrolyzing] from Aliivibrio fischeri (strain ATCC 700601 / ES114) (Vibrio fischeri).